A 69-amino-acid chain; its full sequence is Large ribosomal subunit protein uL29 (69 aa).

Belongs to the universal ribosomal protein uL29 family.

The chain is Large ribosomal subunit protein uL29 from Sulfolobus acidocaldarius (strain ATCC 33909 / DSM 639 / JCM 8929 / NBRC 15157 / NCIMB 11770).